Here is a 434-residue protein sequence, read N- to C-terminus: GPI-anchor transamidase component PIGU (434 aa).

Residues 1-3 lie on the Cytoplasmic side of the membrane; it reads MAA. A helical transmembrane segment spans residues 4–22; the sequence is PLALVLVVAVTVRAALFRS. Topologically, residues 23 to 78 are lumenal; that stretch reads SLAEFISERVEVVSPLSSWKRVVEGLALLDLGVSPYSGAVFHETPLIIYLFHFLID. Residues 79-99 traverse the membrane as a helical segment; it reads YAELVFMITDALTAIALYFAI. Topologically, residues 100–136 are cytoplasmic; sequence QDFNKVVFKKQKLLLELDQYAPDVAELIRTPMEMRYI. 4 helical membrane-spanning segments follow: residues 137–157, 158–177, 178–193, and 194–204; these read PLKV…VAKS, TCAI…IKGS, VFLS…YQSL, and YPVTLFAPGLL. Topologically, residues 205–221 are cytoplasmic; sequence YLLQRQYIPVKVKSKAF. An a cardiolipin-binding site is contributed by Lys215. Residues 222–243 traverse the membrane as a helical segment; that stretch reads WIFSWEYAMMYTGSLVVIVCLS. The Lumenal segment spans residues 244–285; sequence FFLLSSWDFIPAVYGFILSVPDLTPNIGLFWYFFAEMFEHFS. Residues 286–305 form a helical membrane-spanning segment; it reads LFFVCVFQINVFFYTVPLAI. The Cytoplasmic segment spans residues 306-310; it reads KLKEH. Residue Lys308 coordinates a cardiolipin. The next 2 helical transmembrane spans lie at 311–330 and 331–344; these read PIFF…SYPT and VGDV…FPVW. Residues 345-353 lie on the Cytoplasmic side of the membrane; the sequence is NHLYRFLRN. The chain crosses the membrane as a helical span at residues 354–371; it reads IFVLTCIIIVCSLLFPVL. At 372–383 the chain is on the lumenal side; the sequence is WHLWIYAGSANS. A 2-acyl-6-[6-phosphoethanolamine-alpha-D-mannosyl-(1-&gt;2)-6-phosphoethanolamine-alpha-D-mannosyl-(1-&gt;6)-2-phosphoethanolamine-alpha-D-mannosyl-(1-&gt;4)-alpha-D-glucosaminyl]-1-(1-radyl,2-acyl-sn-glycero-3-phospho)-1D-myo-inositol-binding residues include Asn382 and Asn384. The chain crosses the membrane as a helical span at residues 384–405; that stretch reads NFFYAITLTFNVGQILLISDYF. The Cytoplasmic segment spans residues 406 to 434; sequence YAFLRREYYLTHGLYLTAKDGTEAMLVLK.

It belongs to the PIGU family. In terms of assembly, heteropentamer. Part of the GPI-anchor transamidase complex, consisting of PIGK, PIGT, PIGS, PIGU and GAA1.

It is found in the endoplasmic reticulum membrane. It functions in the pathway glycolipid biosynthesis; glycosylphosphatidylinositol-anchor biosynthesis. Component of the glycosylphosphatidylinositol-anchor (GPI-anchor) transamidase (GPI-T) complex that catalyzes the formation of the linkage between a proprotein and a GPI-anchor and participates in GPI anchored protein biosynthesis. Binds the lipid portion of GPI-anchor. May act as an organizer in the transmembrane layer to recruit other subunits, and thus is essential for assembly of the complex. This is GPI-anchor transamidase component PIGU from Mus musculus (Mouse).